The sequence spans 368 residues: Cytochrome P450 119 (368 aa).

Residues His-76, Arg-80, Thr-257, Arg-259, His-315, and Cys-317 each contribute to the heme site.

Belongs to the cytochrome P450 family. The cofactor is heme.

It is found in the cytoplasm. The enzyme catalyses 2 a phenolic donor + H2O2 = 2 a phenolic radical donor + 2 H2O. The endogenous substrate is not known. In vitro, catalyzes the H(2)O(2)-dependent epoxidation of styrene, cis-beta-methylstyrene, and cis-stilbene with retention of stereochemistry. Is able to use cumene hydroperoxide (CHP) or tert-butyl hydroperoxide (TBHP) instead of H(2)O(2) as the electron acceptor. Can also hydroxylate fatty acids such as lauric acid. This Sulfolobus acidocaldarius (strain ATCC 33909 / DSM 639 / JCM 8929 / NBRC 15157 / NCIMB 11770) protein is Cytochrome P450 119 (cyp119).